We begin with the raw amino-acid sequence, 138 residues long: ATP synthase epsilon chain (138 aa).

Belongs to the ATPase epsilon chain family. As to quaternary structure, F-type ATPases have 2 components, CF(1) - the catalytic core - and CF(0) - the membrane proton channel. CF(1) has five subunits: alpha(3), beta(3), gamma(1), delta(1), epsilon(1). CF(0) has three main subunits: a, b and c.

The protein localises to the cell membrane. Its function is as follows. Produces ATP from ADP in the presence of a proton gradient across the membrane. This chain is ATP synthase epsilon chain, found in Streptococcus equi subsp. equi (strain 4047).